A 94-amino-acid polypeptide reads, in one-letter code: Aspartyl/glutamyl-tRNA(Asn/Gln) amidotransferase subunit C (94 aa).

This sequence belongs to the GatC family. In terms of assembly, heterotrimer of A, B and C subunits.

It carries out the reaction L-glutamyl-tRNA(Gln) + L-glutamine + ATP + H2O = L-glutaminyl-tRNA(Gln) + L-glutamate + ADP + phosphate + H(+). It catalyses the reaction L-aspartyl-tRNA(Asn) + L-glutamine + ATP + H2O = L-asparaginyl-tRNA(Asn) + L-glutamate + ADP + phosphate + 2 H(+). Allows the formation of correctly charged Asn-tRNA(Asn) or Gln-tRNA(Gln) through the transamidation of misacylated Asp-tRNA(Asn) or Glu-tRNA(Gln) in organisms which lack either or both of asparaginyl-tRNA or glutaminyl-tRNA synthetases. The reaction takes place in the presence of glutamine and ATP through an activated phospho-Asp-tRNA(Asn) or phospho-Glu-tRNA(Gln). In Campylobacter jejuni subsp. jejuni serotype O:6 (strain 81116 / NCTC 11828), this protein is Aspartyl/glutamyl-tRNA(Asn/Gln) amidotransferase subunit C.